The primary structure comprises 311 residues: Homeobox-leucine zipper protein HOX1 (311 aa).

Disordered stretches follow at residues 29-69 and 97-160; these read AGGA…SDHR and AETT…KKLR. Low complexity predominate over residues 119–145; that stretch reads SSPNSTLSSLSGKRGAPSAATAAAAAA. Residues 154 to 213 constitute a DNA-binding region (homeobox); it reads GSRKKLRLSKDQAAVLEDTFKEHNTLNPKQKAALARQLNLKPRQVEVWFQNRRARTKLKQ. Positions 212-256 are leucine-zipper; it reads KQTEVDCELLKRCCETLTDENRRLHRELQELRALKLATAAAAPHH. The tract at residues 279–311 is disordered; it reads SAATTTRNNSGAAPARPVPTRPWPPAAAQRSSA. A compositionally biased stretch (polar residues) spans 280–289; the sequence is AATTTRNNSG. Positions 294 to 303 are enriched in pro residues; the sequence is RPVPTRPWPP.

It belongs to the HD-ZIP homeobox family. Class II subfamily. In terms of assembly, homodimer. May form a heterodimer with HOX2, HOX3 or HOX7. As to expression, expressed in root provascular and vascular cylinder, provascular and vascular strands of leaves, provascular and vascular strands of the whole panicle, in mature embryo provascular bundles of scutellum and embryonic axis and provascular and vascular strands of young immature spikelet organs. Expressed in differentiating and differentiated xylem and phloem elements, and in outer and inner bundle sheath cells of all vascular bundles. Expressed in auricles, ligules, culm, guard cells brac hairs and pollen.

It localises to the nucleus. In terms of biological role, probable transcription repressor involved leaf development. Binds to the DNA sequence 5'-CAAT[GC]ATTG-3'. May act as a regulatory switch to specify provascular cell fate. This Oryza sativa subsp. japonica (Rice) protein is Homeobox-leucine zipper protein HOX1 (HOX1).